A 402-amino-acid polypeptide reads, in one-letter code: La-related protein 7 homolog (402 aa).

Residues 64–138 are HTH La-type RNA-binding-like region; it reads EPLNPDFLSA…FDNSSHMVIR (75 aa). An RRM-like region region spans residues 148–230; sequence IPLYDRIIYV…LTRKEWTNRE (83 aa). The tract at residues 288–400 is xRRM-like region; that stretch reads DFTKNLLTRI…EEEKNYWRML (113 aa). The region spanning 288–402 is the xRRM domain; it reads DFTKNLLTRI…EKNYWRMLKK (115 aa).

The protein belongs to the LARP7 family. In terms of assembly, component of the telomerase holoenzyme complex composed minimally of trt1 and the telomerase RNA template component. Interacts with skp1.

It localises to the chromosome. Its subcellular location is the telomere. The protein resides in the nucleus. The protein localises to the cytoplasm. In terms of biological role, RNA-binding protein required for assembly of the holoenzyme telomerase ribonucleoprotein (RNP) complex. Specifically binds telomerase RNA ter1 and promotes assembly of ter1 with catalytic subunit trt1. Telomerase is a ribonucleoprotein enzyme essential that copies new telomeric repeats onto chromosome ends and functions to maintain cell division. This Schizosaccharomyces pombe (strain 972 / ATCC 24843) (Fission yeast) protein is La-related protein 7 homolog.